A 660-amino-acid chain; its full sequence is Sodium/nucleoside cotransporter 2 (660 aa).

S46 is subject to Phosphoserine. 14 helical membrane passes run 82 to 102 (ILLG…CILN), 106 to 125 (ALAL…CHFL), 150 to 168 (KRVF…LALD), 174 to 194 (EQLI…ACSK), 202 to 222 (RTVF…IRTE), 235 to 255 (IQIF…DTLV), 262 to 282 (QSLP…YLGL), 297 to 316 (TMGT…FVGM), 338 to 357 (VMTG…FISF), 364 to 383 (LISA…KLVY), 425 to 445 (VAAN…TLSW), 456 to 476 (SFQV…GVQW), 531 to 551 (TTFS…LGGL), and 569 to 589 (ALFT…ILYV).

It belongs to the concentrative nucleoside transporter (CNT) (TC 2.A.41) family.

It localises to the membrane. The protein resides in the apicolateral cell membrane. The catalysed reaction is adenosine(out) + Na(+)(out) = adenosine(in) + Na(+)(in). It catalyses the reaction inosine(out) + Na(+)(out) = inosine(in) + Na(+)(in). It carries out the reaction guanosine(out) + Na(+)(out) = guanosine(in) + Na(+)(in). The enzyme catalyses uridine(out) + Na(+)(out) = uridine(in) + Na(+)(in). Functionally, sodium-dependent and purine-selective transporter. Exhibits the transport characteristics of the nucleoside transport system cif or N1 subtype (N1/cif) (selective for purine nucleosides and uridine). Plays a critical role in specific uptake and salvage of purine nucleosides in kidney and other tissues. May contribute to regulate the transport of organic compounds in testes across the blood-testis-barrier. The sequence is that of Sodium/nucleoside cotransporter 2 (Slc28a2) from Mus musculus (Mouse).